The chain runs to 84 residues: Small ribosomal subunit protein bS18A (84 aa).

It belongs to the bacterial ribosomal protein bS18 family. Part of the 30S ribosomal subunit. Forms a tight heterodimer with protein bS6.

In terms of biological role, binds as a heterodimer with protein bS6 to the central domain of the 16S rRNA, where it helps stabilize the platform of the 30S subunit. The chain is Small ribosomal subunit protein bS18A (rpsR1) from Mycobacterium bovis (strain ATCC BAA-935 / AF2122/97).